Consider the following 284-residue polypeptide: 2-dehydro-3-deoxyphosphooctonate aldolase (284 aa).

Belongs to the KdsA family.

It is found in the cytoplasm. It catalyses the reaction D-arabinose 5-phosphate + phosphoenolpyruvate + H2O = 3-deoxy-alpha-D-manno-2-octulosonate-8-phosphate + phosphate. It functions in the pathway carbohydrate biosynthesis; 3-deoxy-D-manno-octulosonate biosynthesis; 3-deoxy-D-manno-octulosonate from D-ribulose 5-phosphate: step 2/3. The protein operates within bacterial outer membrane biogenesis; lipopolysaccharide biosynthesis. This Salmonella paratyphi A (strain ATCC 9150 / SARB42) protein is 2-dehydro-3-deoxyphosphooctonate aldolase.